Here is a 195-residue protein sequence, read N- to C-terminus: MINRQQGFTLLEVMAALAIFSMLSVLAFMIFSQASELHQRSQKEIQQFNQLQRTITILDNDLLQLVARRNRSTDKIMVLGEEAIFTTQSRDPLAPLSEAQTLLTVHWYLRNHTLYRAVRTSVDGRKDQPAQAMLEHVESFLLESNSGESQELPLSVTLHLQTQQYGGLQRRFALPEQLAREESPAQTQAGNNNHE.

Residues 1-7 constitute a propeptide, leader sequence; sequence MINRQQG. Phe8 is subject to N-methylphenylalanine. Residues 8 to 29 form a helical membrane-spanning segment; that stretch reads FTLLEVMAALAIFSMLSVLAFM.

This sequence belongs to the GSP J family. In terms of assembly, type II secretion is composed of four main components: the outer membrane complex, the inner membrane complex, the cytoplasmic secretion ATPase and the periplasm-spanning pseudopilus. Interacts with core component GspG. In terms of processing, cleaved by prepilin peptidase. Methylated by prepilin peptidase at the amino group of the N-terminal phenylalanine once the leader sequence is cleaved by prepilin peptidase.

The protein resides in the cell inner membrane. Functionally, component of the type II secretion system required for the energy-dependent secretion of extracellular factors such as proteases and toxins from the periplasm. Part of the pseudopilus tip complex that is critical for the recognition and binding of secretion substrates. This chain is Type II secretion system protein J (gspJ), found in Escherichia coli (strain K12).